Reading from the N-terminus, the 446-residue chain is Adenylosuccinate synthetase (446 aa).

GTP is bound by residues Gly-21–Lys-27 and Gly-49–Thr-51. Asp-22 acts as the Proton acceptor in catalysis. Mg(2+) contacts are provided by Asp-22 and Gly-49. IMP contacts are provided by residues Asp-22–Lys-25, Asn-47–His-50, Thr-141, Arg-155, Gln-236, Thr-251, and Arg-319. His-50 acts as the Proton donor in catalysis. Val-315–Arg-321 contributes to the substrate binding site. GTP-binding positions include Arg-321, Lys-347–Asp-349, and Ser-429–Ser-431.

This sequence belongs to the adenylosuccinate synthetase family. As to quaternary structure, homodimer. Requires Mg(2+) as cofactor.

It is found in the cytoplasm. The catalysed reaction is IMP + L-aspartate + GTP = N(6)-(1,2-dicarboxyethyl)-AMP + GDP + phosphate + 2 H(+). The protein operates within purine metabolism; AMP biosynthesis via de novo pathway; AMP from IMP: step 1/2. Plays an important role in the de novo pathway of purine nucleotide biosynthesis. Catalyzes the first committed step in the biosynthesis of AMP from IMP. The sequence is that of Adenylosuccinate synthetase from Polaromonas sp. (strain JS666 / ATCC BAA-500).